A 502-amino-acid polypeptide reads, in one-letter code: ATP synthase subunit alpha (502 aa).

The tract at residues 115 to 137 (VDGLGPVETTETRPIESPAPGVM) is disordered. 169 to 176 (GDRQTGKT) serves as a coordination point for ATP.

This sequence belongs to the ATPase alpha/beta chains family. In terms of assembly, F-type ATPases have 2 components, CF(1) - the catalytic core - and CF(0) - the membrane proton channel. CF(1) has five subunits: alpha(3), beta(3), gamma(1), delta(1), epsilon(1). CF(0) has three main subunits: a(1), b(2) and c(9-12). The alpha and beta chains form an alternating ring which encloses part of the gamma chain. CF(1) is attached to CF(0) by a central stalk formed by the gamma and epsilon chains, while a peripheral stalk is formed by the delta and b chains.

The protein resides in the cell membrane. It carries out the reaction ATP + H2O + 4 H(+)(in) = ADP + phosphate + 5 H(+)(out). In terms of biological role, produces ATP from ADP in the presence of a proton gradient across the membrane. The alpha chain is a regulatory subunit. The chain is ATP synthase subunit alpha from Geobacillus kaustophilus (strain HTA426).